Consider the following 727-residue polypeptide: Cadmium-transporting ATPase (727 aa).

In terms of domain architecture, HMA spans 12–75 (EMNVYRVQGF…AGAFENLKVS (64 aa)). Residues Cys23 and Cys26 each contribute to the Cd(2+) site. Helical transmembrane passes span 106 to 126 (STLL…FVNG), 130 to 150 (LVTS…LFKV), 171 to 191 (IGAT…LFAI), 336 to 356 (IIMV…GGSW), and 364 to 384 (LAVL…ISIV). Asp415 (4-aspartylphosphate intermediate) is an active-site residue. A run of 2 helical transmembrane segments spans residues 672 to 694 (LNII…LLVI) and 699 to 721 (TLWI…SLRL).

This sequence belongs to the cation transport ATPase (P-type) (TC 3.A.3) family. Type IB subfamily.

It is found in the cell membrane. It catalyses the reaction Cd(2+)(in) + ATP + H2O = Cd(2+)(out) + ADP + phosphate + H(+). Its activity is regulated as follows. Inhibited by the antibiotic bafilomycin A1. Partially inhibited by DCCD, nigericin and FCCP. Functionally, couples the hydrolysis of ATP with the export of cadmium. Involved in cadmium resistance. This Staphylococcus aureus protein is Cadmium-transporting ATPase.